Consider the following 171-residue polypeptide: CDP-archaeol synthase (171 aa).

4 helical membrane-spanning segments follow: residues 11–31 (VLYV…GLVF), 65–85 (VGLV…IGVI), 129–149 (LILV…IMLI), and 151–171 (LVLH…DVWY).

This sequence belongs to the CDP-archaeol synthase family. It depends on Mg(2+) as a cofactor.

It is found in the cell membrane. The enzyme catalyses 2,3-bis-O-(geranylgeranyl)-sn-glycerol 1-phosphate + CTP + H(+) = CDP-2,3-bis-O-(geranylgeranyl)-sn-glycerol + diphosphate. It functions in the pathway membrane lipid metabolism; glycerophospholipid metabolism. Its function is as follows. Catalyzes the formation of CDP-2,3-bis-(O-geranylgeranyl)-sn-glycerol (CDP-archaeol) from 2,3-bis-(O-geranylgeranyl)-sn-glycerol 1-phosphate (DGGGP) and CTP. This reaction is the third ether-bond-formation step in the biosynthesis of archaeal membrane lipids. In Methanothermobacter thermautotrophicus (strain ATCC 29096 / DSM 1053 / JCM 10044 / NBRC 100330 / Delta H) (Methanobacterium thermoautotrophicum), this protein is CDP-archaeol synthase.